We begin with the raw amino-acid sequence, 246 residues long: Carboxy-S-adenosyl-L-methionine synthase (246 aa).

Residues Y39, 64 to 66, 89 to 90, 117 to 118, N132, and R199 contribute to the S-adenosyl-L-methionine site; these read GCS, DN, and DI.

Belongs to the class I-like SAM-binding methyltransferase superfamily. Cx-SAM synthase family. Homodimer.

The enzyme catalyses prephenate + S-adenosyl-L-methionine = carboxy-S-adenosyl-L-methionine + 3-phenylpyruvate + H2O. Catalyzes the conversion of S-adenosyl-L-methionine (SAM) to carboxy-S-adenosyl-L-methionine (Cx-SAM). This Erwinia tasmaniensis (strain DSM 17950 / CFBP 7177 / CIP 109463 / NCPPB 4357 / Et1/99) protein is Carboxy-S-adenosyl-L-methionine synthase.